The following is a 459-amino-acid chain: MSNRFAVILAAGKGTRMKSKLYKVLHPVCGKPMVQHVVNEVSQLGLQKLVTVVGHGAEKVQEQLGNVSEFALQAEQLGTAHAVDQAASVLANEEGTTLVICGDTPLITAETMEALLQQHEEAGAMATVLTAYIEEPAGYGRIVRNENGHVEKIVEHKDANEKELAIKEINTGTYCFDNKALFASLSKVSNDNVQGEYYLPDVIEILKNEGHIVSAYQTEHFDETLGVNDRVALSQAEIIMKNRINRKNMVNGVTIIDPSNTYISTDAVIGSDTVLHPGTVIEGNTVIGSDCEIGPHTVIRDSEIGDRTVIRQSTVHDSKLGTVVSVGPFAHIRPDSVIGDEVRVGNFVEIKKTVFGNRSKASHLSYIGDAQVGEDVNLGCGSITVNYDGKNKFKTVIGNGVFIGCNSNLVAPVTVEDGAYVAAGSTITENVPSKALSVARARQVNKEDYVDQLLNKKKS.

The tract at residues 1–230 (MSNRFAVILA…FDETLGVNDR (230 aa)) is pyrophosphorylase. UDP-N-acetyl-alpha-D-glucosamine is bound by residues 9-12 (LAAG), Lys-23, Gln-73, and 78-79 (GT). Mg(2+) is bound at residue Asp-103. 4 residues coordinate UDP-N-acetyl-alpha-D-glucosamine: Gly-140, Glu-155, Asn-170, and Asn-228. A Mg(2+)-binding site is contributed by Asn-228. A linker region spans residues 231–251 (VALSQAEIIMKNRINRKNMVN). The tract at residues 252-459 (GVTIIDPSNT…VDQLLNKKKS (208 aa)) is N-acetyltransferase. UDP-N-acetyl-alpha-D-glucosamine is bound by residues Arg-333 and Lys-351. Catalysis depends on His-363, which acts as the Proton acceptor. Tyr-366 and Asn-377 together coordinate UDP-N-acetyl-alpha-D-glucosamine. Acetyl-CoA contacts are provided by residues 386 to 387 (NY), Ala-423, and Arg-440.

It in the N-terminal section; belongs to the N-acetylglucosamine-1-phosphate uridyltransferase family. The protein in the C-terminal section; belongs to the transferase hexapeptide repeat family. As to quaternary structure, homotrimer. Mg(2+) is required as a cofactor.

It is found in the cytoplasm. The catalysed reaction is alpha-D-glucosamine 1-phosphate + acetyl-CoA = N-acetyl-alpha-D-glucosamine 1-phosphate + CoA + H(+). The enzyme catalyses N-acetyl-alpha-D-glucosamine 1-phosphate + UTP + H(+) = UDP-N-acetyl-alpha-D-glucosamine + diphosphate. It functions in the pathway nucleotide-sugar biosynthesis; UDP-N-acetyl-alpha-D-glucosamine biosynthesis; N-acetyl-alpha-D-glucosamine 1-phosphate from alpha-D-glucosamine 6-phosphate (route II): step 2/2. It participates in nucleotide-sugar biosynthesis; UDP-N-acetyl-alpha-D-glucosamine biosynthesis; UDP-N-acetyl-alpha-D-glucosamine from N-acetyl-alpha-D-glucosamine 1-phosphate: step 1/1. Its pathway is bacterial outer membrane biogenesis; LPS lipid A biosynthesis. Functionally, catalyzes the last two sequential reactions in the de novo biosynthetic pathway for UDP-N-acetylglucosamine (UDP-GlcNAc). The C-terminal domain catalyzes the transfer of acetyl group from acetyl coenzyme A to glucosamine-1-phosphate (GlcN-1-P) to produce N-acetylglucosamine-1-phosphate (GlcNAc-1-P), which is converted into UDP-GlcNAc by the transfer of uridine 5-monophosphate (from uridine 5-triphosphate), a reaction catalyzed by the N-terminal domain. In Bacillus mycoides (strain KBAB4) (Bacillus weihenstephanensis), this protein is Bifunctional protein GlmU.